A 369-amino-acid chain; its full sequence is Gibberellin 3-beta-dioxygenase 2-3 (369 aa).

The Fe2OG dioxygenase domain maps to 205–306 (MTATMHLNWY…RISLGYFLGP (102 aa)). Fe cation is bound by residues H229, D231, and H287. R297 is a catalytic residue.

This sequence belongs to the iron/ascorbate-dependent oxidoreductase family. GA3OX subfamily. Requires L-ascorbate as cofactor. Fe cation serves as cofactor.

It carries out the reaction gibberellin A20 + 2-oxoglutarate + O2 = gibberellin A1 + succinate + CO2. Converts the inactive gibberellin precursors GA9 and GA20 in the bioactives gibberellins GA4 and GA1. The polypeptide is Gibberellin 3-beta-dioxygenase 2-3 (GA3ox2-3) (Triticum aestivum (Wheat)).